Consider the following 223-residue polypeptide: Small ribosomal subunit protein uS3 (223 aa).

Positions 39-107 (VREFLHKKLA…PVQINIEEVR (69 aa)) constitute a KH type-2 domain.

The protein belongs to the universal ribosomal protein uS3 family. As to quaternary structure, part of the 30S ribosomal subunit. Forms a tight complex with proteins S10 and S14.

In terms of biological role, binds the lower part of the 30S subunit head. Binds mRNA in the 70S ribosome, positioning it for translation. This is Small ribosomal subunit protein uS3 from Francisella tularensis subsp. holarctica (strain FTNF002-00 / FTA).